The sequence spans 367 residues: Histidinol-phosphate aminotransferase (367 aa).

N6-(pyridoxal phosphate)lysine is present on K225.

This sequence belongs to the class-II pyridoxal-phosphate-dependent aminotransferase family. Histidinol-phosphate aminotransferase subfamily. As to quaternary structure, homodimer. Pyridoxal 5'-phosphate is required as a cofactor.

It catalyses the reaction L-histidinol phosphate + 2-oxoglutarate = 3-(imidazol-4-yl)-2-oxopropyl phosphate + L-glutamate. It participates in amino-acid biosynthesis; L-histidine biosynthesis; L-histidine from 5-phospho-alpha-D-ribose 1-diphosphate: step 7/9. This Hyphomonas neptunium (strain ATCC 15444) protein is Histidinol-phosphate aminotransferase.